The chain runs to 474 residues: MYRVAKASEYLAITGAGIDDIKLQKKAWIFPGQSCTVFDLSPVNYTFEVQAMSAEKLPFVLPAVFTIGPRVDDQESLLKYAKLISPHDRHSNHVNELVQGIIEGETRVLAASMTMEEVFRGTKQFKQEVFDKVQLELNQFGLLIYNANVKQLVDVPGHEYFSYLGQKTQMEAANQAKVDVAEAKMKGEIGSKLRVGQTLQNAAKIDAETKVIAMQRAGESEKQGIKVRTEVKVFENQREAEVAEANSELAKKKAAWTKAAQVAEVEAKKAVALREAELQGEVEKMNALTTTEKLKADLLSKASVQYETKVQEANWELYKKQKEAEAILFEKKAEAEAQKALADSTFYARKQEAEAELYAKKKEAEGIVTLGNAQGAYVSTLLNALGNNYTAVRDYLMINGGMFQEIAKINAEAVRGLEPKISIWTNGGDNSGGEGAMKEVAGVYKMLPPLFKTVHEQTGMLPPAWMGSLSDKSS.

A lipid anchor (S-palmitoyl cysteine) is attached at Cys-35. Coiled coils occupy residues 235 to 255 (ENQR…KKAA) and 305 to 325 (QYET…KEAE).

This sequence belongs to the band 7/mec-2 family. Flotillin subfamily. Post-translationally, may be palmitoylated. Expressed in all plant organs. Primarily expressed in vascular tissues. No change in spatial expression in root upon inoculation. Expression limited to the nodule vascular tissue.

The protein resides in the cell membrane. It is found in the membrane. It localises to the caveola. Functionally, may act as a scaffolding protein within caveolar membranes, functionally participating in formation of caveolae or caveolae-like vesicles. May be involved in nodule formation. The polypeptide is Flotillin-like protein 3 (FLOT3) (Medicago truncatula (Barrel medic)).